The chain runs to 373 residues: L-threonine 3-dehydrogenase, mitochondrial (373 aa).

Residues 62–67, 88–90, 106–107, Y195, K199, and I225 each bind NAD(+); these read GGLGQL, DIR, and DI. Y195 functions as the Proton donor/acceptor in the catalytic mechanism.

This sequence belongs to the NAD(P)-dependent epimerase/dehydratase family. As to quaternary structure, homodimer.

The protein localises to the mitochondrion. It catalyses the reaction L-threonine + NAD(+) = (2S)-2-amino-3-oxobutanoate + NADH + H(+). It functions in the pathway amino-acid degradation; L-threonine degradation via oxydo-reductase pathway; glycine from L-threonine: step 1/2. In terms of biological role, catalyzes the NAD(+)-dependent oxidation of L-threonine to 2-amino-3-ketobutyrate, mediating L-threonine catabolism. The chain is L-threonine 3-dehydrogenase, mitochondrial from Bos taurus (Bovine).